The sequence spans 217 residues: Putative thymidylate synthase (217 aa).

The active site involves Cys-139.

It belongs to the thymidylate synthase family. Archaeal-type ThyA subfamily. In terms of assembly, monomer.

The protein localises to the cytoplasm. It participates in pyrimidine metabolism; dTTP biosynthesis. Functionally, may catalyze the biosynthesis of dTMP using an unknown cosubstrate. The polypeptide is Putative thymidylate synthase (Methanosarcina barkeri (strain Fusaro / DSM 804)).